Reading from the N-terminus, the 353-residue chain is Photosystem II D2 protein (353 aa).

Thr-2 is modified (N-acetylthreonine). Phosphothreonine is present on Thr-2. Residues 41-61 (CAYFALGGWFTGTTFVTSWYT) traverse the membrane as a helical segment. Position 118 (His-118) interacts with chlorophyll a. Residues 125 to 141 (GFMLRQFELARSVQLRP) form a helical membrane-spanning segment. Residues Gln-130 and Asn-143 each contribute to the pheophytin a site. A helical membrane pass occupies residues 153–166 (VFVSVFLIYPLGQS). His-198 contacts chlorophyll a. Residues 208–228 (AALLCAIHGATVENTLFEDGD) form a helical membrane-spanning segment. Positions 215 and 262 each coordinate a plastoquinone. Residue His-215 coordinates Fe cation. His-269 contributes to the Fe cation binding site. Residues 279-295 (GSWMSAIGVVGLALNLR) form a helical membrane-spanning segment.

It belongs to the reaction center PufL/M/PsbA/D family. PSII is composed of 1 copy each of membrane proteins PsbA, PsbB, PsbC, PsbD, PsbE, PsbF, PsbH, PsbI, PsbJ, PsbK, PsbL, PsbM, PsbT, PsbX, PsbY, PsbZ, Psb30/Ycf12, at least 3 peripheral proteins of the oxygen-evolving complex and a large number of cofactors. It forms dimeric complexes. It depends on The D1/D2 heterodimer binds P680, chlorophylls that are the primary electron donor of PSII, and subsequent electron acceptors. It shares a non-heme iron and each subunit binds pheophytin, quinone, additional chlorophylls, carotenoids and lipids. There is also a Cl(-1) ion associated with D1 and D2, which is required for oxygen evolution. The PSII complex binds additional chlorophylls, carotenoids and specific lipids. as a cofactor.

It is found in the plastid. The protein localises to the chloroplast thylakoid membrane. The enzyme catalyses 2 a plastoquinone + 4 hnu + 2 H2O = 2 a plastoquinol + O2. Functionally, photosystem II (PSII) is a light-driven water:plastoquinone oxidoreductase that uses light energy to abstract electrons from H(2)O, generating O(2) and a proton gradient subsequently used for ATP formation. It consists of a core antenna complex that captures photons, and an electron transfer chain that converts photonic excitation into a charge separation. The D1/D2 (PsbA/PsbD) reaction center heterodimer binds P680, the primary electron donor of PSII as well as several subsequent electron acceptors. D2 is needed for assembly of a stable PSII complex. This chain is Photosystem II D2 protein, found in Pinus koraiensis (Korean pine).